A 434-amino-acid chain; its full sequence is MTKTDIAARVYNHTWKLDPIVRSLIDTDFYKLLMLQMIWKLYPDVDATFSLINRTKSVRLAEVIDEKELREQLDHARTLRLSKKEMIWLAGNSFYGRAQIFEPEFLTWLSNFQLPDYELSKRDGQYVLDFHGSWKETTMWEIPALAIINELRSRTALKALGPFTLDVLYARAKAKMWEKVERLRELPDLHISDFGTRRRHSFLWQRWCVEALKEGVPHAFTGTSNVLLAMDSDLEAVGTNAHELPMVAAALAKTDEELGKAPYKVLRDWNRLYGGNLLVVLPDAFGTASFLRNAPEWVADWTGFRPDSAPPIEGGEKIIDWWKKMGRDPRQKLLIFSDGLDVDAIIATYKHFEGRVRMGFGWGTNLTNDFAGCAPTEIHGLNPISIVCKVIEANGRPAVKLSDNPQKATGEPAEVERYLKFFGAEDRVDHEVLV.

At His242 the chain carries Phosphohistidine; by autocatalysis.

It belongs to the NAPRTase family. Post-translationally, transiently phosphorylated on a His residue during the reaction cycle. Phosphorylation strongly increases the affinity for substrates and increases the rate of nicotinate D-ribonucleotide production. Dephosphorylation regenerates the low-affinity form of the enzyme, leading to product release.

It carries out the reaction nicotinate + 5-phospho-alpha-D-ribose 1-diphosphate + ATP + H2O = nicotinate beta-D-ribonucleotide + ADP + phosphate + diphosphate. It participates in cofactor biosynthesis; NAD(+) biosynthesis; nicotinate D-ribonucleotide from nicotinate: step 1/1. Functionally, catalyzes the synthesis of beta-nicotinate D-ribonucleotide from nicotinate and 5-phospho-D-ribose 1-phosphate at the expense of ATP. The sequence is that of Nicotinate phosphoribosyltransferase from Rhizobium rhizogenes (strain K84 / ATCC BAA-868) (Agrobacterium radiobacter).